Consider the following 149-residue polypeptide: MNKGHRHIIIRELITSNEIDTQEDLVELLLERDVKVTQATVSRDIKELHLVKVPTQTGGYKYSLPADNSFNPHQKLKRALIDCFIGIDTVQFMIILKVMPGNGNSVGALIDNLDWPEKAGTICGDDTCLIICRSEENAKTLTDRFIDML.

The protein belongs to the ArgR family.

Its subcellular location is the cytoplasm. It functions in the pathway amino-acid biosynthesis; L-arginine biosynthesis [regulation]. Regulates arginine biosynthesis genes. The sequence is that of Arginine repressor from Listeria welshimeri serovar 6b (strain ATCC 35897 / DSM 20650 / CCUG 15529 / CIP 8149 / NCTC 11857 / SLCC 5334 / V8).